A 643-amino-acid polypeptide reads, in one-letter code: Phosphomethylpyrimidine synthase (643 aa).

Residues Asn248, Met277, Tyr306, His342, 362-364, 403-406, and Glu442 contribute to the substrate site; these read SRG and DGLR. Zn(2+) is bound at residue His446. Substrate is bound at residue Tyr469. His510 serves as a coordination point for Zn(2+). Residues Cys590, Cys593, and Cys598 each coordinate [4Fe-4S] cluster.

Belongs to the ThiC family. Homodimer. It depends on [4Fe-4S] cluster as a cofactor.

It carries out the reaction 5-amino-1-(5-phospho-beta-D-ribosyl)imidazole + S-adenosyl-L-methionine = 4-amino-2-methyl-5-(phosphooxymethyl)pyrimidine + CO + 5'-deoxyadenosine + formate + L-methionine + 3 H(+). It functions in the pathway cofactor biosynthesis; thiamine diphosphate biosynthesis. Its function is as follows. Catalyzes the synthesis of the hydroxymethylpyrimidine phosphate (HMP-P) moiety of thiamine from aminoimidazole ribotide (AIR) in a radical S-adenosyl-L-methionine (SAM)-dependent reaction. The polypeptide is Phosphomethylpyrimidine synthase (Burkholderia lata (strain ATCC 17760 / DSM 23089 / LMG 22485 / NCIMB 9086 / R18194 / 383)).